We begin with the raw amino-acid sequence, 542 residues long: Chaperonin GroEL 2 (542 aa).

Residues 30–33 (TLGP), K51, 87–91 (DGTTT), G415, and D496 contribute to the ATP site.

It belongs to the chaperonin (HSP60) family. Forms a cylinder of 14 subunits composed of two heptameric rings stacked back-to-back. Interacts with the co-chaperonin GroES.

It localises to the cytoplasm. It catalyses the reaction ATP + H2O + a folded polypeptide = ADP + phosphate + an unfolded polypeptide.. Its function is as follows. Together with its co-chaperonin GroES, plays an essential role in assisting protein folding. The GroEL-GroES system forms a nano-cage that allows encapsulation of the non-native substrate proteins and provides a physical environment optimized to promote and accelerate protein folding. This chain is Chaperonin GroEL 2, found in Rhizobium meliloti (strain 1021) (Ensifer meliloti).